A 53-amino-acid chain; its full sequence is Lantibiotic mutacin-2 (53 aa).

A propeptide spanning residues Met1–Gly26 is cleaved from the precursor. Positions Thr36–Cys41 form a cross-link, beta-methyllanthionine (Thr-Cys). Cross-links (lanthionine (Ser-Cys)) lie at residues Ser38 to Cys52 and Ser45 to Cys53. Thr51 carries the 2,3-didehydrobutyrine modification.

Post-translationally, maturation of lantibiotics involves the enzymatic conversion of Thr, and Ser into dehydrated AA and the formation of thioether bonds with cysteine. This is followed by membrane translocation and cleavage of the modified precursor. In terms of processing, it is not established whether the 2,3-didehydrobutyrine is the E- or Z-isomer.

In terms of biological role, lanthionine-containing peptide antibiotic (lantibiotic) active on Gram-positive bacteria including M.luteus, S.aureus, Streptococcus, P.micros, P.acidilactici, C.sporogenes, C.diphtheriae, A.viscosus, G.vaginalis, P.acnes, L.monocytogenes and M.smegmatis, and Gram-negative bacteria including C.jejuni, H.pylori and N.gonorrhoeae. Transiently and partially depolarizes the transmembrane electrical potential and pH gradient of susceptible cells, inhibits the uptake of amino acids and depletes the intracellular ATP pool. This chain is Lantibiotic mutacin-2, found in Streptococcus mutans.